Here is a 203-residue protein sequence, read N- to C-terminus: Peroxiredoxin (203 aa).

Positions 3 to 156 constitute a Thioredoxin domain; that stretch reads VVLGQKAPDF…IIRVIKALQF (154 aa). Cys44 acts as the Cysteine sulfenic acid (-SOH) intermediate in catalysis. Arg119 lines the substrate pocket.

It belongs to the peroxiredoxin family. Prx6 subfamily. In terms of assembly, homodecamer. Pentamer of dimers that assemble into a ring structure.

It localises to the cytoplasm. It catalyses the reaction a hydroperoxide + [thioredoxin]-dithiol = an alcohol + [thioredoxin]-disulfide + H2O. Functionally, thiol-specific peroxidase that catalyzes the reduction of hydrogen peroxide and organic hydroperoxides to water and alcohols, respectively. Plays a role in cell protection against oxidative stress by detoxifying peroxides. This chain is Peroxiredoxin, found in Thermoplasma volcanium (strain ATCC 51530 / DSM 4299 / JCM 9571 / NBRC 15438 / GSS1).